Consider the following 54-residue polypeptide: Light-harvesting protein B-870 beta chain (54 aa).

Residues Glu-1 to Lys-20 lie on the Cytoplasmic side of the membrane. The a bacteriochlorophyll site is built by His-19 and His-37. Residues Ile-21 to Trp-43 form a helical membrane-spanning segment. The Periplasmic segment spans residues Arg-44–Ser-54.

Belongs to the antenna complex beta subunit family. In terms of assembly, the core complex is formed by different alpha and beta chains, binding bacteriochlorophyll molecules, and arranged most probably in tetrameric structures disposed around the reaction center. The non-pigmented gamma chains may constitute additional components.

The protein localises to the cell inner membrane. Functionally, antenna complexes are light-harvesting systems, which transfer the excitation energy to the reaction centers. The protein is Light-harvesting protein B-870 beta chain of Rhodospirillum rubrum.